The chain runs to 234 residues: Nuclear ubiquitous casein and cyclin-dependent kinase substrate 1 (234 aa).

A disordered region spans residues 1–234 (MSRPVRNRKV…SEDEASSGED (234 aa)). Y13 is modified (phosphotyrosine). Phosphoserine is present on residues S14 and S19. Y26 is modified (phosphotyrosine). Over residues 35–51 (KKIRSSPREAKNKRRSG) the composition is skewed to basic residues. S54, S58, S61, S73, S75, and S79 each carry phosphoserine. A compositionally biased stretch (basic and acidic residues) spans 64–77 (KDVKTKKDDSHSAE). Residues 91 to 100 (QQRQAASKAA) are compositionally biased toward low complexity. Residues 111-124 (VGSEEEPEEDDEAP) are compositionally biased toward acidic residues. S113, S130, S132, and S144 each carry phosphoserine. The span at 132–145 (SDEDFLMEDDDDSD) shows a compositional bias: acidic residues. Positions 149–174 (SKKKNKKMVKKSKPERKEKKMPKPRL) are enriched in basic residues. Residue T179 is modified to Phosphothreonine. S181 carries the post-translational modification Phosphoserine. Residues 185 to 199 (GKAKVGRPTASKKSK) are compositionally biased toward basic residues. The residue at position 202 (T202) is a Phosphothreonine. Phosphoserine occurs at positions 204, 214, 225, and 231. Residues 223–234 (EGSEDEASSGED) are compositionally biased toward acidic residues.

As to quaternary structure, does not interact with RAD51. Phosphorylated in an ATM-dependent manner in response to DNA damage. Phosphorylated by CDK1 and casein kinase.

The protein resides in the nucleus. It localises to the chromosome. Functionally, chromatin-associated protein involved in DNA repair by promoting homologous recombination (HR). Binds double-stranded DNA (dsDNA) and secondary DNA structures, such as D-loop structures, but with less affinity than RAD51AP1. The sequence is that of Nuclear ubiquitous casein and cyclin-dependent kinase substrate 1 (Nucks1) from Mus musculus (Mouse).